Reading from the N-terminus, the 139-residue chain is Putative nickel-responsive regulator (139 aa).

Residues His76, His87, His89, and Cys95 each coordinate Ni(2+).

This sequence belongs to the transcriptional regulatory CopG/NikR family. The cofactor is Ni(2+).

Functionally, transcriptional regulator. This chain is Putative nickel-responsive regulator, found in Rhodopseudomonas palustris (strain HaA2).